The sequence spans 124 residues: Glutaredoxin-2 (124 aa).

C13 and C16 are joined by a disulfide.

The protein belongs to the glutaredoxin family. In terms of assembly, homodimer.

It localises to the host cytoplasm. In terms of biological role, glutaredoxin necessary for virion morphogenesis and virus replication. Functions as a thiol-disulfide transfer protein between membrane-associated OPG128 and substrates OPG095 or OPG053. The complete pathway for formation of disulfide bonds in intracellular virion membrane proteins sequentially involves oxidation of OPG072, OPG128 and OPG088. Exhibit thioltransferase and dehydroascorbate reductase activities in vitro. The polypeptide is Glutaredoxin-2 (OPG088) (Oryctolagus cuniculus (Rabbit)).